The primary structure comprises 368 residues: Terpene cyclase penA (368 aa).

6 helical membrane-spanning segments follow: residues I10 to I30, L81 to M101, L118 to M138, L192 to H212, F233 to I253, and L334 to A354.

Belongs to the membrane-bound ascI terpene cyclase family.

Its subcellular location is the membrane. The protein operates within secondary metabolite biosynthesis. In terms of biological role, part of the gene cluster that mediates the biosynthesis of the indole diterpenes penitrems. The geranylgeranyl diphosphate (GGPP) synthase penG catalyzes the first step in penitrem biosynthesis via conversion of farnesyl pyrophosphate and isopentyl pyrophosphate into geranylgeranyl pyrophosphate (GGPP). Condensation of indole-3-glycerol phosphate with GGPP by the prenyl transferase penC then forms 3-geranylgeranylindole (3-GGI). Epoxidation by the FAD-dependent monooxygenase penM leads to a epoxidized-GGI that is substrate of the terpene cyclase penB for cyclization to yield paspaline. Paspaline is subsequently converted to 13-desoxypaxilline by the cytochrome P450 monooxygenase penP, the latter being then converted to paxilline by the cytochrome P450 monooxygenase penQ. Paxilline is converted to beta-paxitriol via C-10 ketoreduction by the short-chain dehydrogenase PC-15 which can be monoprenylated at the C-20 by the indole diterpene prenyltransferase penD. A two-step elimination (acetylation and elimination) process performed by the O-acetyltransferase PC-16 and the P.simplicissimum ptmI-ortholog not yet identified in P.crustosum, leads to the production of the prenylated form of penijanthine. The FAD-linked oxidoreductase ptmO then converts the prenylated form of penijanthine into PC-M5 which is in turn transformed into PC-M4 by the aromatic dimethylallyltransferase PC-22. A series of oxidation steps involving 4 cytochrome P450 monooxygenases (PC-21, PC-05, PC-23, PC-20) and a FAD-dependent monooxygenase (PC-14) are required for the transformation of PC-M4 to penitrems A and E. Synthesis of these final products is proposed to proceed via penitrems D and C (PC-21, PC-05, PC-14) and penitrems B and F (PC-21, PC-05, PC-14, PC-23). The polypeptide is Terpene cyclase penA (Penicillium crustosum (Blue mold fungus)).